Here is a 214-residue protein sequence, read N- to C-terminus: Large ribosomal subunit protein uL3 (214 aa).

It belongs to the universal ribosomal protein uL3 family. Part of the 50S ribosomal subunit. Forms a cluster with proteins L14 and L19.

One of the primary rRNA binding proteins, it binds directly near the 3'-end of the 23S rRNA, where it nucleates assembly of the 50S subunit. The sequence is that of Large ribosomal subunit protein uL3 from Streptomyces coelicolor (strain ATCC BAA-471 / A3(2) / M145).